The chain runs to 364 residues: tRNA-specific 2-thiouridylase MnmA 2 (364 aa).

ATP-binding positions include 10–17 (GMSGGVDS) and M36. C106 functions as the Nucleophile in the catalytic mechanism. An intrachain disulfide couples C106 to C204. G130 is an ATP binding site. The segment at 154–156 (KDQ) is interaction with tRNA. The active-site Cysteine persulfide intermediate is C204. Residues 310–311 (RY) are interaction with tRNA.

This sequence belongs to the MnmA/TRMU family.

It localises to the cytoplasm. It carries out the reaction S-sulfanyl-L-cysteinyl-[protein] + uridine(34) in tRNA + AH2 + ATP = 2-thiouridine(34) in tRNA + L-cysteinyl-[protein] + A + AMP + diphosphate + H(+). Catalyzes the 2-thiolation of uridine at the wobble position (U34) of tRNA, leading to the formation of s(2)U34. The sequence is that of tRNA-specific 2-thiouridylase MnmA 2 from Caldanaerobacter subterraneus subsp. tengcongensis (strain DSM 15242 / JCM 11007 / NBRC 100824 / MB4) (Thermoanaerobacter tengcongensis).